Consider the following 218-residue polypeptide: Thiamine-phosphate synthase (218 aa).

4-amino-2-methyl-5-(diphosphooxymethyl)pyrimidine is bound by residues 46-50 (QFRDK) and aspartate 83. Mg(2+) contacts are provided by aspartate 84 and aspartate 103. Residue serine 122 participates in 4-amino-2-methyl-5-(diphosphooxymethyl)pyrimidine binding. 149 to 151 (TNS) contacts 2-[(2R,5Z)-2-carboxy-4-methylthiazol-5(2H)-ylidene]ethyl phosphate. Lysine 152 is a binding site for 4-amino-2-methyl-5-(diphosphooxymethyl)pyrimidine. 2-[(2R,5Z)-2-carboxy-4-methylthiazol-5(2H)-ylidene]ethyl phosphate-binding positions include glycine 181 and 201–202 (IT).

The protein belongs to the thiamine-phosphate synthase family. Mg(2+) serves as cofactor.

It catalyses the reaction 2-[(2R,5Z)-2-carboxy-4-methylthiazol-5(2H)-ylidene]ethyl phosphate + 4-amino-2-methyl-5-(diphosphooxymethyl)pyrimidine + 2 H(+) = thiamine phosphate + CO2 + diphosphate. It carries out the reaction 2-(2-carboxy-4-methylthiazol-5-yl)ethyl phosphate + 4-amino-2-methyl-5-(diphosphooxymethyl)pyrimidine + 2 H(+) = thiamine phosphate + CO2 + diphosphate. The enzyme catalyses 4-methyl-5-(2-phosphooxyethyl)-thiazole + 4-amino-2-methyl-5-(diphosphooxymethyl)pyrimidine + H(+) = thiamine phosphate + diphosphate. It participates in cofactor biosynthesis; thiamine diphosphate biosynthesis; thiamine phosphate from 4-amino-2-methyl-5-diphosphomethylpyrimidine and 4-methyl-5-(2-phosphoethyl)-thiazole: step 1/1. Its function is as follows. Condenses 4-methyl-5-(beta-hydroxyethyl)thiazole monophosphate (THZ-P) and 2-methyl-4-amino-5-hydroxymethyl pyrimidine pyrophosphate (HMP-PP) to form thiamine monophosphate (TMP). This is Thiamine-phosphate synthase from Actinobacillus pleuropneumoniae serotype 7 (strain AP76).